The chain runs to 957 residues: Melanoma-associated antigen E1 (957 aa).

The tract at residues 1-455 (MSLVSQNSRR…DSEGPKGAEG (455 aa)) is disordered. 2 stretches are compositionally biased toward polar residues: residues 85 to 96 (SEASSASGQPTI) and 104 to 130 (VLPTPSEGLSTSGPPTISKGLCTSVTL). Residues 138–162 (TSRPPTSSEEPSTSVPPTASEVPST) show a composition bias toward low complexity. Composition is skewed to polar residues over residues 219–244 (GLSTSVQATPDEGPSTSVPPTATEGL), 268–320 (PSTS…STSV), 329–344 (STSVPPTATEELSTSV), 364–380 (LSTSVPPTASDGSDTSV), and 414–428 (TLFSSSASVDRNPSK). MAGE domains follow at residues 491–690 (MEQN…YNEA) and 745–936 (LESK…YREA). An interaction with DTNA region spans residues 743–957 (SRLESKARKL…HRQIFVHNFR (215 aa)).

In terms of assembly, interacts with DTNA. Interacts with TRIM28.

It localises to the cytoplasm. The protein localises to the perinuclear region. The protein resides in the nucleus. Its subcellular location is the cell membrane. Functionally, may enhance ubiquitin ligase activity of RING-type zinc finger-containing E3 ubiquitin-protein ligases. Proposed to act through recruitment and/or stabilization of the Ubl-conjugating enzyme (E2) at the E3:substrate complex. This chain is Melanoma-associated antigen E1 (MAGEE1), found in Homo sapiens (Human).